Reading from the N-terminus, the 566-residue chain is MAFRRVLLSHLRRSHHTCSSLSPHHVSATTQPSIALALFQSRFFSTPSDLDSELTRFRDDSIAGVGSNDHGLEFDDSIASLGSNGHGLEFGDSIGSLGSNGYGLEFGDLSQDLSNYDYLTQPVISLLDSYHDITGLPWWVVIATSTVAFRTALLPILILQRKQTKRISQFLPKLPHFWPPQGSGRSVLDQLKLFRKERKDIGCPSFLWVPAYFSIQISCFFLWITSIRRMSLDHHPGFDSGGALWFQNLTEIPNGLYGPLFPFLIAGLHYTNTQITFTASSVHKVDKFTELAKAYKTFLNLLTCALYFLSFQMPQGSLLYWATNLSFSIAQQSILNHPVVSAKLGLQANDSVQKEAGNPILTNINEGKLTDPSSKGRLISVHNLTPKELVALSAKYLSGGHKDKSIPLLRLALEKDPEYLQAMIILGQALYQKDQFAEAAKCLEQAASKLLDTSPTEVEEVDLLIVASQWAGVSNIRQGKTSEGITHLERVANMKEPDDPKSKAHYLDALVLYSSAIFNEGRREEAAKYLRRVVAYDPSFSELLKQCEEDDTIPTSSSSNSTSKTS.

A mitochondrion-targeting transit peptide spans 1–44; it reads MAFRRVLLSHLRRSHHTCSSLSPHHVSATTQPSIALALFQSRFF. Transmembrane regions (helical) follow at residues 139–159, 207–227, 249–269, and 301–321; these read WVVIATSTVAFRTALLPILIL, LWVPAYFSIQISCFFLWITSI, LTEIPNGLYGPLFPFLIAGLH, and LLTCALYFLSFQMPQGSLLYW. TPR repeat units follow at residues 386 to 419, 420 to 453, 465 to 498, and 507 to 540; these read PKELVALSAKYLSGGHKDKSIPLLRLALEKDPEY, LQAMIILGQALYQKDQFAEAAKCLEQAASKLLDT, IVASQWAGVSNIRQGKTSEGITHLERVANMKEPD, and LDALVLYSSAIFNEGRREEAAKYLRRVVAYDPSF. The segment at 547 to 566 is disordered; it reads CEEDDTIPTSSSSNSTSKTS. Low complexity predominate over residues 555-566; that stretch reads TSSSSNSTSKTS.

The protein belongs to the OXA1/ALB3/YidC (TC 2.A.9.2) family.

The protein localises to the mitochondrion inner membrane. Functionally, probably required for the insertion of integral membrane proteins into the mitochondrial inner membrane. This is ALBINO3-like protein 3, mitochondrial (ALB3L3) from Arabidopsis thaliana (Mouse-ear cress).